Here is a 336-residue protein sequence, read N- to C-terminus: Phospho-N-acetylmuramoyl-pentapeptide-transferase (336 aa).

The next 10 helical transmembrane spans lie at Leu3–Ile23, Gly53–Ile73, Ser78–Leu98, Leu118–Ile138, Val143–Val163, Gly174–Ala194, Phe200–Asn220, Val226–Ala246, Trp251–Val271, and Ala316–Phe336.

It belongs to the glycosyltransferase 4 family. MraY subfamily. Mg(2+) is required as a cofactor.

It is found in the cell membrane. It catalyses the reaction UDP-N-acetyl-alpha-D-muramoyl-L-alanyl-gamma-D-glutamyl-L-lysyl-D-alanyl-D-alanine + di-trans,octa-cis-undecaprenyl phosphate = Mur2Ac(oyl-L-Ala-gamma-D-Glu-L-Lys-D-Ala-D-Ala)-di-trans,octa-cis-undecaprenyl diphosphate + UMP. Its pathway is cell wall biogenesis; peptidoglycan biosynthesis. Its function is as follows. Catalyzes the initial step of the lipid cycle reactions in the biosynthesis of the cell wall peptidoglycan: transfers peptidoglycan precursor phospho-MurNAc-pentapeptide from UDP-MurNAc-pentapeptide onto the lipid carrier undecaprenyl phosphate, yielding undecaprenyl-pyrophosphoryl-MurNAc-pentapeptide, known as lipid I. The polypeptide is Phospho-N-acetylmuramoyl-pentapeptide-transferase (Streptococcus pyogenes serotype M1).